Reading from the N-terminus, the 193-residue chain is MNTLIDNPKAMASGYLAMAQMFSYPDADAWRRLTENGLVDPALGRETLEAEYLGLFEMGGGTSTMSLYEGQNRPERGRDGILQELLRFYEFFDVHLNQDEREYPDHLVTELEFLAWLCLQEHAALRDGRDAEPFQNAARDFLVRHLAAWLPDFRQRLEATETTYAQYGPTLGELVETHRSRLGDQPQKSREMQ.

Belongs to the type II DMSO reductase enzyme chaperone family.

The protein localises to the cytoplasm. May function as a system-specific chaperone protein essential for the assembly of an active chlorate reductase ClrABC. In Ideonella dechloratans, this protein is Chlorate reductase assembly chaperone protein (clrD).